Consider the following 573-residue polypeptide: Probable D-xylulose kinase A (573 aa).

Residues His97, Arg168, Asp284, and Asn285 each coordinate substrate. Residues Trp366, 471-472 (GG), and Asn475 each bind ATP.

This sequence belongs to the FGGY kinase family.

It localises to the cytoplasm. The catalysed reaction is D-xylulose + ATP = D-xylulose 5-phosphate + ADP + H(+). Its function is as follows. Highly specific D-xylulose kinase which participates in the catabolism of xylose. Xylose is a major component of hemicelluloses such as xylan. Most fungi utilize D-xylose via three enzymatic reactions, xylose reductase (XR), xylitol dehydrogenase (XDH), and xylulokinase, to form xylulose 5-phosphate, which enters pentose phosphate pathway. The polypeptide is Probable D-xylulose kinase A (xkiA) (Aspergillus clavatus (strain ATCC 1007 / CBS 513.65 / DSM 816 / NCTC 3887 / NRRL 1 / QM 1276 / 107)).